Reading from the N-terminus, the 226-residue chain is Ribosome maturation factor RimM (226 aa).

Residues 144–225 (ADEFYWVDLI…RIVVDWEADY (82 aa)) enclose the PRC barrel domain.

It belongs to the RimM family. Binds ribosomal protein uS19.

It localises to the cytoplasm. Functionally, an accessory protein needed during the final step in the assembly of 30S ribosomal subunit, possibly for assembly of the head region. Essential for efficient processing of 16S rRNA. May be needed both before and after RbfA during the maturation of 16S rRNA. It has affinity for free ribosomal 30S subunits but not for 70S ribosomes. The polypeptide is Ribosome maturation factor RimM (Burkholderia ambifaria (strain ATCC BAA-244 / DSM 16087 / CCUG 44356 / LMG 19182 / AMMD) (Burkholderia cepacia (strain AMMD))).